Consider the following 294-residue polypeptide: N-acetylmuramic acid 6-phosphate etherase (294 aa).

Residues 54-217 enclose the SIS domain; that stretch reads VIKSFEEEGR…STASMIGVGK (164 aa). Glu82 serves as the catalytic Proton donor. Glu113 is an active-site residue.

Belongs to the GCKR-like family. MurNAc-6-P etherase subfamily. Homodimer.

The enzyme catalyses N-acetyl-D-muramate 6-phosphate + H2O = N-acetyl-D-glucosamine 6-phosphate + (R)-lactate. It participates in amino-sugar metabolism; N-acetylmuramate degradation. Functionally, specifically catalyzes the cleavage of the D-lactyl ether substituent of MurNAc 6-phosphate, producing GlcNAc 6-phosphate and D-lactate. This is N-acetylmuramic acid 6-phosphate etherase from Bacillus cereus (strain ATCC 14579 / DSM 31 / CCUG 7414 / JCM 2152 / NBRC 15305 / NCIMB 9373 / NCTC 2599 / NRRL B-3711).